We begin with the raw amino-acid sequence, 257 residues long: Gamma-secretase subunit APH-1B (257 aa).

A run of 7 helical transmembrane segments spans residues 5 to 25, 32 to 52, 70 to 90, 115 to 135, 158 to 178, 186 to 206, and 213 to 233; these read VFFG…VFTI, IIFL…SSLV, YLLI…RFAY, LLAY…SFVN, YSAF…IVFF, WGIL…TFIS, and LASA…AAGG.

It belongs to the APH-1 family. As to quaternary structure, probable component of the gamma-secretase complex, a complex composed of a presenilin homodimer (PSEN1 or PSEN2), nicastrin (NCSTN), APH1 (APH1A or APH1B) and PEN2. Such minimal complex is sufficient for secretase activity, although other components may exist. Interacts with PSEN1 and PSEN2.

It localises to the membrane. In terms of biological role, probable subunit of the gamma-secretase complex, an endoprotease complex that catalyzes the intramembrane cleavage of integral proteins such as Notch receptors and APP (amyloid-beta precursor protein). It probably represents a stabilizing cofactor for the presenilin homodimer that promotes the formation of a stable complex. Probably present in a minority of gamma-secretase complexes compared to APH1A. In Pongo abelii (Sumatran orangutan), this protein is Gamma-secretase subunit APH-1B (APH1B).